The sequence spans 233 residues: 2,3,4,5-tetrahydropyridine-2,6-dicarboxylate N-acetyltransferase (233 aa).

It belongs to the transferase hexapeptide repeat family. DapH subfamily.

The catalysed reaction is (S)-2,3,4,5-tetrahydrodipicolinate + acetyl-CoA + H2O = L-2-acetamido-6-oxoheptanedioate + CoA. The protein operates within amino-acid biosynthesis; L-lysine biosynthesis via DAP pathway; LL-2,6-diaminopimelate from (S)-tetrahydrodipicolinate (acetylase route): step 1/3. Catalyzes the transfer of an acetyl group from acetyl-CoA to tetrahydrodipicolinate. This Thermotoga sp. (strain RQ2) protein is 2,3,4,5-tetrahydropyridine-2,6-dicarboxylate N-acetyltransferase.